The following is a 263-amino-acid chain: Mannose-specific lectin 2 (263 aa).

A signal peptide spans 1–24 (MAKSLVLSSLLLALLLAAPLASLA). 2 Bulb-type lectin domains span residues 26 to 136 (NNVL…APNR) and 150 to 260 (RNVL…SSAS). Cystine bridges form between Cys54–Cys76 and Cys178–Cys203.

In terms of assembly, heterotetramer of 2 domain 1 and 2 domain 2 chains arranged as a dimer of domain 1/domain 2 heterodimers.

Mannose-specific lectin. Has weak agglutinating activity towards trypsin-treated erythrocytes from rabbit but not from human. The polypeptide is Mannose-specific lectin 2 (Crocus vernus (Dutch crocus)).